Reading from the N-terminus, the 63-residue chain is Bowman-birk type proteinase inhibitor (63 aa).

7 disulfide bridges follow: C7/C61, C8/C23, C11/C57, C13/C21, C31/C38, C35/C50, and C40/C48.

In terms of biological role, inhibits trypsin, chymotrypsin, plasmin and factor XIIa. Does not inhibit factor Xa, thrombin and plasma kallikrein. The polypeptide is Bowman-birk type proteinase inhibitor (Amburana acreana (Cerejeira)).